Consider the following 188-residue polypeptide: Protein YecM (188 aa).

It to H.influenzae HI_1582/HI_1581.

The chain is Protein YecM (yecM) from Escherichia coli (strain K12).